A 436-amino-acid chain; its full sequence is MTKPIVAIVGKPNVGKSTIFNRVVGERISIVEDTPGVTRDRIYSSGEWLTHEFNIIDTGGIEIGDAPFQTQIRAQAEIAIEEADVIIFMVNVREGLTQSDEMVAQMLYKSKKPVVLAVNKVDNLEMRNDIYDFYSLGFGDPYPISGSHGLGLGDLLDAVVENFNKESEDPYDEDTIRLSIIGRPNVGKSSLVNAILGEERVIVSNVAGTTRDAIDTEYSYDGQDYVLIDTAGMRKKGKVYESTEKYSVLRALKAIERSEVVLVVIDAEQGIIEQDKRVAGYAHEEGKAIVIVVNKWDTVEKDSKTMKKFTDDVRNEFQFLDYAQIAFVSAKEGLRLKTLFPYINQASENHKKRVQSSTLNEVVTDAISMNPTPTDKGRRLNVFYTTQVAIEPPTFVVFVNDVELMHFSYRRYLENQIRNAFGFEGTPIHIIPRKRN.

2 consecutive EngA-type G domains span residues 4–167 (PIVA…NKES) and 176–351 (IRLS…ENHK). GTP is bound by residues 10–17 (GKPNVGKS), 57–61 (DTGGI), 119–122 (NKVD), 182–189 (GRPNVGKS), 229–233 (DTAGM), and 294–297 (NKWD). A KH-like domain is found at 352-436 (KRVQSSTLNE…PIHIIPRKRN (85 aa)).

The protein belongs to the TRAFAC class TrmE-Era-EngA-EngB-Septin-like GTPase superfamily. EngA (Der) GTPase family. In terms of assembly, associates with the 50S ribosomal subunit.

In terms of biological role, GTPase that plays an essential role in the late steps of ribosome biogenesis. The protein is GTPase Der of Staphylococcus epidermidis (strain ATCC 35984 / DSM 28319 / BCRC 17069 / CCUG 31568 / BM 3577 / RP62A).